A 419-amino-acid chain; its full sequence is L-2-hydroxyglutarate dehydrogenase, mitochondrial (419 aa).

A mitochondrion-targeting transit peptide spans 1–51 (MVPALRYLVGACGRARGGFAGDFPGASGLASGRPRPLCGGSRSASTSSFDI). An N6-acetyllysine mark is found at K104 and K173.

It belongs to the L2HGDH family. Requires FAD as cofactor.

It is found in the mitochondrion. The catalysed reaction is (S)-2-hydroxyglutarate + A = 2-oxoglutarate + AH2. The sequence is that of L-2-hydroxyglutarate dehydrogenase, mitochondrial (L2HGDH) from Pongo abelii (Sumatran orangutan).